A 267-amino-acid chain; its full sequence is Cyclin-C (267 aa).

Positions Ile48–Ile151 constitute a Cyclin N-terminal domain.

It belongs to the cyclin family. Cyclin C subfamily. Component of the Cdk8 module of the Mediator complex.

The protein resides in the nucleus. Component of the Mediator complex, a coactivator involved in regulated gene transcription of nearly all RNA polymerase II-dependent genes. Mediator functions as a bridge to convey information from gene-specific regulatory proteins to the basal RNA polymerase II transcription machinery. Mediator is recruited to promoters by direct interactions with regulatory proteins and serves as a scaffold for the assembly of a functional preinitiation complex with RNA polymerase II and the general transcription factors. Binds to and activates cyclin-dependent kinase Cdk8 that phosphorylates the CTD (C-terminal domain) of the large subunit of RNA polymerase II (RNAp II), which may inhibit the formation of a transcription initiation complex. The chain is Cyclin-C (CycC) from Drosophila pseudoobscura pseudoobscura (Fruit fly).